The chain runs to 152 residues: Large ribosomal subunit protein uL15 (152 aa).

A disordered region spans residues 31-58; that stretch reads GASCGFGMRGQKSRSGRPTRPGFEGGQM.

It belongs to the universal ribosomal protein uL15 family. Part of the 50S ribosomal subunit.

Its function is as follows. Binds to the 23S rRNA. This chain is Large ribosomal subunit protein uL15, found in Parasynechococcus marenigrum (strain WH8102).